Here is a 120-residue protein sequence, read N- to C-terminus: NAD(P)H-quinone oxidoreductase subunit 3, chloroplastic (120 aa).

The next 3 helical transmembrane spans lie at 9 to 29 (IFWVFLIISSVIPILAFLISG), 64 to 84 (MFALVFVVFDVETVFLYPWAM), and 88 to 108 (VLGVSVFIEALIFVLILIVGL).

It belongs to the complex I subunit 3 family. NDH is composed of at least 16 different subunits, 5 of which are encoded in the nucleus.

It localises to the plastid. The protein localises to the chloroplast thylakoid membrane. The enzyme catalyses a plastoquinone + NADH + (n+1) H(+)(in) = a plastoquinol + NAD(+) + n H(+)(out). The catalysed reaction is a plastoquinone + NADPH + (n+1) H(+)(in) = a plastoquinol + NADP(+) + n H(+)(out). NDH shuttles electrons from NAD(P)H:plastoquinone, via FMN and iron-sulfur (Fe-S) centers, to quinones in the photosynthetic chain and possibly in a chloroplast respiratory chain. The immediate electron acceptor for the enzyme in this species is believed to be plastoquinone. Couples the redox reaction to proton translocation, and thus conserves the redox energy in a proton gradient. In Cucumis sativus (Cucumber), this protein is NAD(P)H-quinone oxidoreductase subunit 3, chloroplastic.